A 94-amino-acid chain; its full sequence is Aspartyl/glutamyl-tRNA(Asn/Gln) amidotransferase subunit C (94 aa).

The protein belongs to the GatC family. As to quaternary structure, heterotrimer of A, B and C subunits.

The enzyme catalyses L-glutamyl-tRNA(Gln) + L-glutamine + ATP + H2O = L-glutaminyl-tRNA(Gln) + L-glutamate + ADP + phosphate + H(+). It catalyses the reaction L-aspartyl-tRNA(Asn) + L-glutamine + ATP + H2O = L-asparaginyl-tRNA(Asn) + L-glutamate + ADP + phosphate + 2 H(+). In terms of biological role, allows the formation of correctly charged Asn-tRNA(Asn) or Gln-tRNA(Gln) through the transamidation of misacylated Asp-tRNA(Asn) or Glu-tRNA(Gln) in organisms which lack either or both of asparaginyl-tRNA or glutaminyl-tRNA synthetases. The reaction takes place in the presence of glutamine and ATP through an activated phospho-Asp-tRNA(Asn) or phospho-Glu-tRNA(Gln). This Heliobacterium modesticaldum (strain ATCC 51547 / Ice1) protein is Aspartyl/glutamyl-tRNA(Asn/Gln) amidotransferase subunit C.